The chain runs to 414 residues: 3-oxoacyl-[acyl-carrier-protein] synthase 2 (414 aa).

Residues 3–411 form the Ketosynthase family 3 (KS3) domain; it reads KRRVVITGLG…GTNGTLVLSR (409 aa). Catalysis depends on for beta-ketoacyl synthase activity residues cysteine 164, histidine 304, and histidine 341.

Belongs to the thiolase-like superfamily. Beta-ketoacyl-ACP synthases family. Homodimer.

It catalyses the reaction a fatty acyl-[ACP] + malonyl-[ACP] + H(+) = a 3-oxoacyl-[ACP] + holo-[ACP] + CO2. The enzyme catalyses (9Z)-hexadecenoyl-[ACP] + malonyl-[ACP] + H(+) = 3-oxo-(11Z)-octadecenoyl-[ACP] + holo-[ACP] + CO2. It participates in lipid metabolism; fatty acid biosynthesis. Involved in the type II fatty acid elongation cycle. Catalyzes the elongation of a wide range of acyl-ACP by the addition of two carbons from malonyl-ACP to an acyl acceptor. Can efficiently catalyze the conversion of palmitoleoyl-ACP (cis-hexadec-9-enoyl-ACP) to cis-vaccenoyl-ACP (cis-octadec-11-enoyl-ACP), an essential step in the thermal regulation of fatty acid composition. This Coxiella burnetii (strain RSA 493 / Nine Mile phase I) protein is 3-oxoacyl-[acyl-carrier-protein] synthase 2 (fabF).